The primary structure comprises 394 residues: Xylose isomerase (394 aa).

Active-site residues include His54 and Asp57. Glu181, Glu217, His220, Asp245, Asp255, Asp257, and Asp292 together coordinate Mg(2+).

It belongs to the xylose isomerase family. As to quaternary structure, homotetramer. The cofactor is Mg(2+).

It localises to the cytoplasm. The enzyme catalyses alpha-D-xylose = alpha-D-xylulofuranose. This chain is Xylose isomerase (xylA), found in Actinoplanes sp. (strain ATCC 31351 / 3876) (Ampullariella sp.).